Reading from the N-terminus, the 507-residue chain is MEFLLGNPFSTPVGQCLEKATDGSLQSEDWTLNMEICDIINETEEGPKDAIRALKKRLSGNRNYREVMLALTVLETCVKNCGHRFHLLVANRDFIDSVLVKIISPKNNPPTIVQDKVLALIQAWADAFRSSPDLTGVVHIYEELKRRGIEFPMADLDALSPIHTPQRSVPEMDPAATIPRSQTQPRTTAGTYSSPPPASYSTLQAPALSVTGPITANSEQIARLRSELDIVRGNTKVMSEMLTEMVPGQEDSSDLELLQELNRTCRAMQHRIVELISRVSNEEVTEELLHVNDDLNNVFLRYERFERYRSGRSVQNASNGVLSEVTEDNLIDLGPGSPAVVSPMVGSTAPPSSLSSQLAGLDLGTESVSGTLSSLQQCKPQDGFDMFAQTRGNSLAEQRKTVTYEDPQAVGGLASALDNRKQNSEMIPVAQPSVMDDIEVWLRTDLKGDDLEEGVTSEEFDKFLEERAKAAETVPDLPSPPTEAPAPASNTSTRKKPERSDDALFAL.

Residues 20–152 form the VHS domain; it reads ATDGSLQSED…ELKRRGIEFP (133 aa). Serine 160 carries the post-translational modification Phosphoserine. Threonine 164 is subject to Phosphothreonine. The disordered stretch occupies residues 164 to 200; the sequence is TPQRSVPEMDPAATIPRSQTQPRTTAGTYSSPPPASY. A GAT domain is found at 219 to 307; sequence EQIARLRSEL…VFLRYERFER (89 aa). Positions 329–334 match the Clathrin-binding motif; it reads NLIDLG. The disordered stretch occupies residues 466 to 507; it reads ERAKAAETVPDLPSPPTEAPAPASNTSTRKKPERSDDALFAL. Basic and acidic residues predominate over residues 498-507; sequence ERSDDALFAL.

It belongs to the TOM1 family. As to quaternary structure, interacts with clathrin, SRC and TOLLIP. Interacts with MYO6. In terms of tissue distribution, ubiquitously expressed. Splicing pattern displays tissue specific variation.

Functionally, acts as a MYO6/Myosin VI adapter protein that targets myosin VI to endocytic structures. May also play a role in recruiting clathrin to endosomes. May regulate growth factor-induced mitogenic signaling. The polypeptide is TOM1-like protein 2 (Tom1l2) (Mus musculus (Mouse)).